We begin with the raw amino-acid sequence, 342 residues long: Tetraacyldisaccharide 4'-kinase (342 aa).

68–75 (TVGGTGKT) serves as a coordination point for ATP.

Belongs to the LpxK family.

It carries out the reaction a lipid A disaccharide + ATP = a lipid IVA + ADP + H(+). It functions in the pathway glycolipid biosynthesis; lipid IV(A) biosynthesis; lipid IV(A) from (3R)-3-hydroxytetradecanoyl-[acyl-carrier-protein] and UDP-N-acetyl-alpha-D-glucosamine: step 6/6. Its function is as follows. Transfers the gamma-phosphate of ATP to the 4'-position of a tetraacyldisaccharide 1-phosphate intermediate (termed DS-1-P) to form tetraacyldisaccharide 1,4'-bis-phosphate (lipid IVA). The polypeptide is Tetraacyldisaccharide 4'-kinase (Burkholderia multivorans (strain ATCC 17616 / 249)).